We begin with the raw amino-acid sequence, 62 residues long: Large ribosomal subunit protein bL28 (62 aa).

Positions 1–28 (MARVCAITGRKARSGNSRSHAMNATKRK) are disordered.

This sequence belongs to the bacterial ribosomal protein bL28 family.

The sequence is that of Large ribosomal subunit protein bL28 from Bacillus thuringiensis (strain Al Hakam).